The sequence spans 504 residues: Bifunctional purine biosynthesis protein PurH (504 aa).

The MGS-like domain maps to 1 to 144 (MRKRALISVY…KSFKNVVVIS (144 aa)).

This sequence belongs to the PurH family.

The catalysed reaction is (6R)-10-formyltetrahydrofolate + 5-amino-1-(5-phospho-beta-D-ribosyl)imidazole-4-carboxamide = 5-formamido-1-(5-phospho-D-ribosyl)imidazole-4-carboxamide + (6S)-5,6,7,8-tetrahydrofolate. It carries out the reaction IMP + H2O = 5-formamido-1-(5-phospho-D-ribosyl)imidazole-4-carboxamide. The protein operates within purine metabolism; IMP biosynthesis via de novo pathway; 5-formamido-1-(5-phospho-D-ribosyl)imidazole-4-carboxamide from 5-amino-1-(5-phospho-D-ribosyl)imidazole-4-carboxamide (10-formyl THF route): step 1/1. It participates in purine metabolism; IMP biosynthesis via de novo pathway; IMP from 5-formamido-1-(5-phospho-D-ribosyl)imidazole-4-carboxamide: step 1/1. In Fusobacterium nucleatum subsp. nucleatum (strain ATCC 25586 / DSM 15643 / BCRC 10681 / CIP 101130 / JCM 8532 / KCTC 2640 / LMG 13131 / VPI 4355), this protein is Bifunctional purine biosynthesis protein PurH.